Reading from the N-terminus, the 166-residue chain is Signal peptidase complex catalytic subunit SEC11 (166 aa).

At 1–9 (MNIRQQITQ) the chain is on the cytoplasmic side. The chain crosses the membrane as a helical; Signal-anchor for type II membrane protein span at residues 10-30 (FLSLAYVFSSAFMLWKTLSVI). The Lumenal segment spans residues 31-166 (ANSHSPIVVV…LGLSSLFSNE (136 aa)). Active-site charge relay system residues include Ser44, His83, and Asp108. The segment at 152–163 (GMLGLLGLSSLF) is C-terminal short (CTS) helix.

The protein belongs to the peptidase S26B family. Component of the signal peptidase complex (SPC) composed of a catalytic subunit SEC11 and three accessory subunits SPC1, SPC2 and SPC3. The complex induces a local thinning of the ER membrane which is used to measure the length of the signal peptide (SP) h-region of protein substrates. This ensures the selectivity of the complex towards h-regions shorter than 18-20 amino acids. SPC associates with the translocon complex.

The protein localises to the endoplasmic reticulum membrane. The enzyme catalyses Cleavage of hydrophobic, N-terminal signal or leader sequences from secreted and periplasmic proteins.. Catalytic component of the signal peptidase complex (SPC) which catalyzes the cleavage of N-terminal signal sequences from nascent proteins as they are translocated into the lumen of the endoplasmic reticulum. Specifically cleaves N-terminal signal peptides that contain a hydrophobic alpha-helix (h-region) shorter than 18-20 amino acids. This is Signal peptidase complex catalytic subunit SEC11 (SEC11) from Candida dubliniensis (strain CD36 / ATCC MYA-646 / CBS 7987 / NCPF 3949 / NRRL Y-17841) (Yeast).